The following is a 708-amino-acid chain: DNA ligase (708 aa).

Residues 35-39, 84-85, and Glu118 contribute to the NAD(+) site; these read DADYD and SL. Lys120 serves as the catalytic N6-AMP-lysine intermediate. Residues Arg141, Glu182, Lys303, and Lys327 each coordinate NAD(+). Zn(2+) contacts are provided by Cys419, Cys422, Cys437, and Cys443. In terms of domain architecture, BRCT spans 628 to 708; sequence TRASEVSGKT…GWAKIVADAQ (81 aa).

It belongs to the NAD-dependent DNA ligase family. LigA subfamily. Requires Mg(2+) as cofactor. Mn(2+) serves as cofactor.

The catalysed reaction is NAD(+) + (deoxyribonucleotide)n-3'-hydroxyl + 5'-phospho-(deoxyribonucleotide)m = (deoxyribonucleotide)n+m + AMP + beta-nicotinamide D-nucleotide.. Its function is as follows. DNA ligase that catalyzes the formation of phosphodiester linkages between 5'-phosphoryl and 3'-hydroxyl groups in double-stranded DNA using NAD as a coenzyme and as the energy source for the reaction. It is essential for DNA replication and repair of damaged DNA. This Rhizorhabdus wittichii (strain DSM 6014 / CCUG 31198 / JCM 15750 / NBRC 105917 / EY 4224 / RW1) (Sphingomonas wittichii) protein is DNA ligase.